Consider the following 72-residue polypeptide: Probable protein transport protein Sec61 subunit gamma (72 aa).

Residues 1-40 lie on the Cytoplasmic side of the membrane; sequence MSQKLQKPSFLSEYLRSIRLFSKKCVRPSGKELSMSIKRH. The chain crosses the membrane as a helical span at residues 41-61; the sequence is AIGIGFLGILGYAIKLIHIPI. Residues 62 to 72 lie on the Extracellular side of the membrane; the sequence is NNIIVSSPGKE.

The protein belongs to the SecE/SEC61-gamma family. In terms of assembly, heterotrimeric complex composed of SEC61-alpha, SEC61-beta and SEC61-gamma.

The protein localises to the endoplasmic reticulum membrane. Necessary for protein translocation in the endoplasmic reticulum. In Encephalitozoon cuniculi (strain GB-M1) (Microsporidian parasite), this protein is Probable protein transport protein Sec61 subunit gamma.